The chain runs to 763 residues: MTQKTTLVLLALAVITIFALVCVLLAGRSGDGGRLSQPLHCPSVLPSVQPQTHPGQSQPFADLSPEELTAVMSFLIKHLGPGLVDAAQARPSDNCVFSVELQLPAKAAALAHLDRGGPPPVREALAIIFFGGQPKPNVSELVVGPLPHPSYMRDVTVERHGGPLPYYRRPVLTREYQDIQEMIFHRELPQASGLLHHCCFYKRQGHNLLKMTTAPRGLQSGDRATWFGIYYNLSGAGFYPHPIGLELLVDHKALDPALWTIQKVFYQGRYYESLTQLEDMFEAGLVNVVLVPDNGTGGSWSLKSSVPPGRAPPLQFHPEGPRFSVQGSQVRSSLWAFSFGLGAFSGPRIFDIRFQGERVAYEISVQEAIALYGGNSPASMSTCYMDGSFGIGKYSTPLTRGVDCPYLATYVDWHFLLESQTPKTLRDAFCVFEQNQGLPLRRHHSDFYSHYFGGVVETVLVVRSVATLLNYDYVWDMVFHSNGAIEVKFHATGYITSAFFFGAGEKFGNRVAEHTLGTVHTHNAHFKVDLDVAGLKNWAWAEDLAFVPMNVPWQPEFQMQRLQVTRKLLETEEEAAFPLGNATPRYLYLASNHSNKWGHRRGYRIQILSFAGKPLPQESPIEKAFTWGRYHLAVTQRKEEEPSSSSIYNQNDPWTPTVDFTDFISNETIAGEDLVAWVTAGFLHIPHAEDIPNTVTVGNGVGFFLRPYNFFDEDPSFYSPDSIYFRKDQDVTDCEVNSLACLSQTANCVPDLPAFSHGGFTYK.

Residues 2–6 (TQKTT) are Cytoplasmic-facing. The helical; Signal-anchor for type II membrane protein transmembrane segment at 7–27 (LVLLALAVITIFALVCVLLAG) threads the bilayer. Topologically, residues 28–763 (RSGDGGRLSQ…AFSHGGFTYK (736 aa)) are extracellular. N-linked (GlcNAc...) asparagine glycosylation is present at N137. C198 and C199 are joined by a disulfide. 2 N-linked (GlcNAc...) asparagine glycosylation sites follow: N232 and N294. D386 functions as the Proton acceptor in the catalytic mechanism. Cysteines 404 and 430 form a disulfide. Y471 functions as the Schiff-base intermediate with substrate; via topaquinone in the catalytic mechanism. 2',4',5'-topaquinone is present on Y471. H520 and H522 together coordinate Cu(2+). Ca(2+)-binding residues include D529, L530, D531, and E572. N-linked (GlcNAc...) asparagine glycans are attached at residues N581 and N592. Residues E641 and F663 each contribute to the Ca(2+) site. N-linked (GlcNAc...) asparagine glycosylation occurs at N666. The Ca(2+) site is built by E667, D673, and L674. Residue H684 coordinates Cu(2+). C734 and C741 form a disulfide bridge.

Belongs to the copper/topaquinone oxidase family. Homodimer; disulfide-linked. Probably forms heterodimers with AOC2. The cofactor is Cu(2+). It depends on Ca(2+) as a cofactor. L-topaquinone is required as a cofactor. In terms of processing, topaquinone (TPQ) is generated by copper-dependent autoxidation of a specific tyrosyl residue. Post-translationally, N- and O-glycosylated. Highly expressed in adipocytes, aorta and lung. Expressed at lower levels in heart, kidney, large intestine, liver, small intestine and stomach.

The protein localises to the cell membrane. It carries out the reaction methylamine + O2 + H2O = formaldehyde + H2O2 + NH4(+). It catalyses the reaction benzylamine + O2 + H2O = benzaldehyde + H2O2 + NH4(+). The enzyme catalyses 2-phenylethylamine + O2 + H2O = 2-phenylacetaldehyde + H2O2 + NH4(+). Functionally, catalyzes the oxidative deamination of primary amines to the corresponding aldehydes with the concomitant production of hydrogen peroxide and ammonia. Has a preference for the primary monoamines methylamine and benzylamine. Could also act on 2-phenylethylamine but much less efficiently. At endothelial cells surface can also function as a cell adhesion protein that participates in lymphocyte extravasation and recirculation by mediating the binding of lymphocytes to peripheral lymph node vascular endothelial cells in an L-selectin-independent fashion. The polypeptide is Amine oxidase [copper-containing] 3 (Rattus norvegicus (Rat)).